The sequence spans 183 residues: Nucleoside triphosphate pyrophosphatase (183 aa).

Residue D71 is the Proton acceptor of the active site.

This sequence belongs to the Maf family. A divalent metal cation is required as a cofactor.

It is found in the cytoplasm. The catalysed reaction is a ribonucleoside 5'-triphosphate + H2O = a ribonucleoside 5'-phosphate + diphosphate + H(+). It catalyses the reaction a 2'-deoxyribonucleoside 5'-triphosphate + H2O = a 2'-deoxyribonucleoside 5'-phosphate + diphosphate + H(+). Functionally, nucleoside triphosphate pyrophosphatase. May have a dual role in cell division arrest and in preventing the incorporation of modified nucleotides into cellular nucleic acids. The sequence is that of Nucleoside triphosphate pyrophosphatase from Campylobacter jejuni subsp. doylei (strain ATCC BAA-1458 / RM4099 / 269.97).